An 856-amino-acid chain; its full sequence is DNA endonuclease RBBP8 (856 aa).

The tract at residues 25-48 (ELWSKLKECHDKDLQELLMKIGKL) is essential for binding to the MRN complex and for RPA focus formation on DNA damage. Coiled-coil stretches lie at residues 38 to 87 (LQEL…EDRL) and 120 to 141 (ITEL…SEQL). Disordered regions lie at residues 143–174 (DMQK…DSPL) and 423–456 (DSEQ…DKEN). The segment covering 156–168 (ENPADTGDGEDGV) has biased composition (acidic residues). Positions 493–515 (SSSRTKLTISLVPEKPDTKTILH) are damage-recruitment motif. Residues 695–732 (SPSQSISCKERSDIPSIENKKITSEKEHESKGEPYQKQ) are disordered. The span at 702-730 (CKERSDIPSIENKKITSEKEHESKGEPYQ) shows a compositional bias: basic and acidic residues. T806 carries the phosphothreonine modification. T818 is subject to Phosphothreonine; by ATR.

The protein belongs to the COM1/SAE2/CtIP family. As to quaternary structure, homotetramer; formed by antiparallel association of helical extensions protruding from the N-termini of two parallel coiled-coil dimers. Interacts with the MRN complex; the interaction links DNA sensing to resection. Interacts with samhd1. In terms of processing, phosphorylation at Thr-818 by atr promotes recruitment to double-strand breaks (DSBs).

The protein localises to the nucleus. The protein resides in the chromosome. Its function is as follows. Endonuclease that cooperates with the MRE11-RAD50-NBN (MRN) complex in DNA-end resection, the first step of double-strand break (DSB) repair through the homologous recombination (HR) pathway. Functions downstream of the MRN complex and ATM, promotes ATR activation and its recruitment to DSBs in the S/G2 phase facilitating the generation of ssDNA. Specifically promotes the endonuclease activity of the MRN complex to clear DNA ends containing protein adducts: recruited to DSBs by nbn following phosphorylation, and promotes the endonuclease of mre11 to clear protein-DNA adducts and generate clean double-strand break ends. The MRN complex and rbbp8/CtIP are also required for chromosome alignment during metaphase. In Xenopus laevis (African clawed frog), this protein is DNA endonuclease RBBP8 (rbbp8).